We begin with the raw amino-acid sequence, 258 residues long: Phosphoribosylaminoimidazole-succinocarboxamide synthase (258 aa).

This sequence belongs to the SAICAR synthetase family.

It catalyses the reaction 5-amino-1-(5-phospho-D-ribosyl)imidazole-4-carboxylate + L-aspartate + ATP = (2S)-2-[5-amino-1-(5-phospho-beta-D-ribosyl)imidazole-4-carboxamido]succinate + ADP + phosphate + 2 H(+). It functions in the pathway purine metabolism; IMP biosynthesis via de novo pathway; 5-amino-1-(5-phospho-D-ribosyl)imidazole-4-carboxamide from 5-amino-1-(5-phospho-D-ribosyl)imidazole-4-carboxylate: step 1/2. This is Phosphoribosylaminoimidazole-succinocarboxamide synthase from Maricaulis maris (strain MCS10) (Caulobacter maris).